The chain runs to 267 residues: Serine/arginine-rich splicing factor 1 (267 aa).

The RRM 1 domain occupies 16 to 91 (CRIYVGNLPP…YRLRVEFPRS (76 aa)). 2 disordered regions span residues 90–137 (RSGR…PSRR) and 212–267 (KVDG…RSRT). Residues 93 to 127 (RGAGGRGGGGGGGGGGGGGGGGGGGGGGGGGGGAP) show a composition bias toward gly residues. Positions 140–214 (YRVVVSGLPP…ETAYIRVKVD (75 aa)) constitute an RRM 2 domain. Basic residues predominate over residues 224–267 (SRSRSRSRSRSRSRSNSRSRSYSPRRSRGSPRYSPRHSRSRSRT).

The protein belongs to the splicing factor SR family.

Its subcellular location is the cytoplasm. The protein localises to the nucleus speckle. May play a role in preventing exon skipping, ensuring the accuracy of splicing and regulating alternative splicing. This is Serine/arginine-rich splicing factor 1 (srsf1) from Xenopus tropicalis (Western clawed frog).